A 259-amino-acid polypeptide reads, in one-letter code: Caffeoyl-CoA O-methyltransferase 1 (259 aa).

The span at 1-14 shows a compositional bias: low complexity; the sequence is MATTTTEATKTSST. The disordered stretch occupies residues 1–29; the sequence is MATTTTEATKTSSTNGEDQKQSQNLRHQE. Position 2 is an N-acetylalanine (Ala-2). Lys-33 provides a ligand contact to substrate. S-adenosyl-L-methionine contacts are provided by residues Thr-75, Glu-97, 99-100, Ser-105, Asp-123, and Ala-152; that span reads GV. Asp-175 is a substrate binding site. Residue Asp-175 participates in a divalent metal cation binding. Asp-177 is an S-adenosyl-L-methionine binding site. 2 residues coordinate a divalent metal cation: Asp-201 and Asn-202. Asn-206 is a substrate binding site.

This sequence belongs to the class I-like SAM-binding methyltransferase superfamily. Cation-dependent O-methyltransferase family. CCoAMT subfamily. It depends on a divalent metal cation as a cofactor. Expressed in stems and roots. Detected in leaves, siliques, flower buds, flowers. Expressed in the tapetum, but not in the endothecium. Detected in the vascular system of leaves and all flower organs, including stigma, stamens, petals and sepals.

It catalyses the reaction (E)-caffeoyl-CoA + S-adenosyl-L-methionine = (E)-feruloyl-CoA + S-adenosyl-L-homocysteine + H(+). Its pathway is aromatic compound metabolism; phenylpropanoid biosynthesis. Methylates caffeoyl-CoA to feruloyl-CoA. Has a very low activity with caffeic acid and esculetin. Involved in scopoletin biosynthesis in roots. The sequence is that of Caffeoyl-CoA O-methyltransferase 1 (CCOAOMT1) from Arabidopsis thaliana (Mouse-ear cress).